We begin with the raw amino-acid sequence, 208 residues long: Ubiquitin-conjugating enzyme E2 S (208 aa).

Positions 14 to 160 (QTIRQVMKEL…ARMMTEIHAQ (147 aa)) constitute a UBC core domain. Residue cysteine 98 is the Glycyl thioester intermediate of the active site. The tract at residues 161 to 196 (PAKCGAGASDAKDDDGPSTKKHAGVDKKLQDKKKEK) is disordered. Basic and acidic residues predominate over residues 170 to 196 (DAKDDDGPSTKKHAGVDKKLQDKKKEK).

It belongs to the ubiquitin-conjugating enzyme family.

The enzyme catalyses S-ubiquitinyl-[E1 ubiquitin-activating enzyme]-L-cysteine + [E2 ubiquitin-conjugating enzyme]-L-cysteine = [E1 ubiquitin-activating enzyme]-L-cysteine + S-ubiquitinyl-[E2 ubiquitin-conjugating enzyme]-L-cysteine.. The protein operates within protein modification; protein ubiquitination. Catalyzes the covalent attachment of ubiquitin to other proteins. Acts as an essential factor of the anaphase promoting complex/cyclosome (APC/C), a cell cycle-regulated ubiquitin ligase that controls progression through mitosis. Acts by specifically elongating polyubiquitin chains initiated by the E2 enzyme vih/UbcH10 on APC/C substrates, enhancing the degradation of APC/C substrates by the proteasome and promoting mitotic exit. The protein is Ubiquitin-conjugating enzyme E2 S of Drosophila grimshawi (Hawaiian fruit fly).